Consider the following 185-residue polypeptide: Threonylcarbamoyl-AMP synthase (185 aa).

One can recognise a YrdC-like domain in the interval 4-185 (SFRVQQAARE…LATGEVVRPG (182 aa)).

The protein belongs to the SUA5 family. TsaC subfamily.

It localises to the cytoplasm. It carries out the reaction L-threonine + hydrogencarbonate + ATP = L-threonylcarbamoyladenylate + diphosphate + H2O. Functionally, required for the formation of a threonylcarbamoyl group on adenosine at position 37 (t(6)A37) in tRNAs that read codons beginning with adenine. Catalyzes the conversion of L-threonine, HCO(3)(-)/CO(2) and ATP to give threonylcarbamoyl-AMP (TC-AMP) as the acyladenylate intermediate, with the release of diphosphate. The polypeptide is Threonylcarbamoyl-AMP synthase (Pseudomonas putida (strain ATCC 47054 / DSM 6125 / CFBP 8728 / NCIMB 11950 / KT2440)).